A 627-amino-acid chain; its full sequence is (+)-3-carene synthase 1, chloroplastic (627 aa).

Residues 1–36 (MSVISIVPLASKPCLYKSFISSTHEPKALRRPISTV) constitute a chloroplast transit peptide. Residues Asp-378, Asp-382, and Asp-530 each contribute to the Mg(2+) site. A DDXXD motif motif is present at residues 378–382 (DDMYD).

The protein belongs to the terpene synthase family. Tpsd subfamily. The cofactor is Mg(2+). It depends on Mn(2+) as a cofactor.

The protein localises to the plastid. It localises to the chloroplast. The enzyme catalyses (2E)-geranyl diphosphate = (+)-car-3-ene + diphosphate. It functions in the pathway terpene metabolism; oleoresin biosynthesis. In terms of biological role, terpene synthase (TPS) involved in the biosynthesis of monoterpene natural products included in conifer oleoresin secretions and volatile emissions; these compounds contribute to biotic and abiotic stress defense against herbivores (e.g. insect attack by white pine weevil P.strobi) and pathogens. Catalyzes the conversion of (2E)-geranyl diphosphate (GPP) to (+)-car-3-ene. The chain is (+)-3-carene synthase 1, chloroplastic from Picea sitchensis (Sitka spruce).